Here is a 109-residue protein sequence, read N- to C-terminus: Large ribosomal subunit protein uL22 (109 aa).

The protein belongs to the universal ribosomal protein uL22 family. Part of the 50S ribosomal subunit.

Its function is as follows. This protein binds specifically to 23S rRNA; its binding is stimulated by other ribosomal proteins, e.g. L4, L17, and L20. It is important during the early stages of 50S assembly. It makes multiple contacts with different domains of the 23S rRNA in the assembled 50S subunit and ribosome. Functionally, the globular domain of the protein is located near the polypeptide exit tunnel on the outside of the subunit, while an extended beta-hairpin is found that lines the wall of the exit tunnel in the center of the 70S ribosome. The chain is Large ribosomal subunit protein uL22 from Paraburkholderia xenovorans (strain LB400).